Here is a 327-residue protein sequence, read N- to C-terminus: uncharacterized protein (327 aa).

One can recognise an S4 RNA-binding domain in the interval 32–105 (VRLDKWLAEQ…IPLDILYEDE (74 aa)). Asp156 is an active-site residue.

The protein belongs to the pseudouridine synthase RluA family.

The catalysed reaction is a uridine in RNA = a pseudouridine in RNA. This is an uncharacterized protein from Synechocystis sp. (strain ATCC 27184 / PCC 6803 / Kazusa).